The chain runs to 79 residues: Major outer membrane lipoprotein Lpp 2 (79 aa).

Residues 1-21 form the signal peptide; sequence MNRTNQLILGAVVLGSTLLAG. The N-palmitoyl cysteine moiety is linked to residue Cys-22. Residue Cys-22 is the site of S-diacylglycerol cysteine attachment. 2 repeats span residues 25–35 and 39–49; these read NAKIDQLSSDV and SAKVEQLSNDV. Residues 28-69 adopt a coiled-coil conformation; that stretch reads IDQLSSDVQTLSAKVEQLSNDVNAMRSDVQAAKDDAARANQR. Lys-79 carries the N6-murein peptidoglycan lysine modification.

It belongs to the Lpp family. As to quaternary structure, homotrimer.

Its subcellular location is the cell outer membrane. It localises to the secreted. The protein localises to the cell wall. Plays an important role in virulence. A highly abundant outer membrane lipoprotein that controls the distance between the inner and outer membranes. The only protein known to be covalently linked to the peptidoglycan network (PGN). Also non-covalently binds the PGN. The link between the cell outer membrane and PGN contributes to maintenance of the structural and functional integrity of the cell envelope, and maintains the correct distance between the PGN and the outer membrane. The sequence is that of Major outer membrane lipoprotein Lpp 2 from Salmonella typhimurium (strain LT2 / SGSC1412 / ATCC 700720).